We begin with the raw amino-acid sequence, 339 residues long: tRNA pseudouridine synthase D (339 aa).

Asp80 (nucleophile) is an active-site residue. The TRUD domain occupies 155 to 311 (GFPNYFTEQR…AKGFSWAFEL (157 aa)).

This sequence belongs to the pseudouridine synthase TruD family.

It catalyses the reaction uridine(13) in tRNA = pseudouridine(13) in tRNA. Responsible for synthesis of pseudouridine from uracil-13 in transfer RNAs. The polypeptide is tRNA pseudouridine synthase D (Haemophilus influenzae (strain PittEE)).